Consider the following 299-residue polypeptide: Probable lipid kinase YegS (299 aa).

Residues 2–133 (AEFPASLLIL…IDMAQVNKQT (132 aa)) enclose the DAGKc domain. Residues Thr-40, 66 to 72 (GDGTINE), and Thr-95 contribute to the ATP site. Mg(2+) contacts are provided by Leu-215, Asp-218, and Leu-220. The active-site Proton acceptor is Glu-271.

Belongs to the diacylglycerol/lipid kinase family. YegS lipid kinase subfamily. Requires Mg(2+) as cofactor. The cofactor is Ca(2+).

Its subcellular location is the cytoplasm. In terms of biological role, probably phosphorylates lipids; the in vivo substrate is unknown. The polypeptide is Probable lipid kinase YegS (Escherichia coli O127:H6 (strain E2348/69 / EPEC)).